The following is a 182-amino-acid chain: Glycerol-3-phosphate acyltransferase 1 (182 aa).

5 helical membrane-spanning segments follow: residues 5–25 (MQFL…AYIV), 54–74 (GYFI…VSIA), 81–101 (STFV…PIVF), 117–137 (IAFD…FYLI), and 157–177 (ILYS…VLIL).

This sequence belongs to the PlsY family. As to quaternary structure, probably interacts with PlsX.

It localises to the cell membrane. The enzyme catalyses an acyl phosphate + sn-glycerol 3-phosphate = a 1-acyl-sn-glycero-3-phosphate + phosphate. Its pathway is lipid metabolism; phospholipid metabolism. Its function is as follows. Catalyzes the transfer of an acyl group from acyl-phosphate (acyl-PO(4)) to glycerol-3-phosphate (G3P) to form lysophosphatidic acid (LPA). This enzyme utilizes acyl-phosphate as fatty acyl donor, but not acyl-CoA or acyl-ACP. This chain is Glycerol-3-phosphate acyltransferase 1, found in Bacillus cereus (strain ATCC 10987 / NRS 248).